The chain runs to 152 residues: Kininogen-1c (152 aa).

An N-terminal signal peptide occupies residues 1–23 (MRLWFCLSLFIVLCLEHFPGTLA). The segment covering 28–44 (VPESEEKTEQFLRDLPK) has biased composition (basic and acidic residues). Residues 28–152 (VPESEEKTEQ…RGKFHSQSHV (125 aa)) form a disordered region.

Belongs to the bradykinin-related peptide family. Expressed by the skin glands.

Its subcellular location is the secreted. Potent vasodilator. Binds B1 (BDKRB1) and B2 (BDKRB2) bradykinin receptors. The polypeptide is Kininogen-1c (Bombina maxima (Giant fire-bellied toad)).